Reading from the N-terminus, the 415-residue chain is Corticotropin-releasing factor receptor 1 (415 aa).

An N-terminal signal peptide occupies residues 1–24; the sequence is MLLAKTPCLLLVQVIAAGISFALT. Residues 25 to 111 are Extracellular-facing; it reads SLQDQCETLQ…CQEILKQEKK (87 aa). 3 disulfides stabilise this stretch: cysteine 30-cysteine 54, cysteine 44-cysteine 87, and cysteine 68-cysteine 102. 4 N-linked (GlcNAc...) asparagine glycosylation sites follow: asparagine 38, asparagine 45, asparagine 78, and asparagine 90. The chain crosses the membrane as a helical span at residues 112–142; it reads TKVHYHIAIVINFLGHSISLCALLVAFILFL. Topologically, residues 143–149 are cytoplasmic; that stretch reads RLRSIRC. Residues 150–174 form a helical membrane-spanning segment; that stretch reads LRNIIHWNLITAFILRNVTWFVMQL. Topologically, residues 175 to 189 are extracellular; sequence TLSHEAHDSNVVWCR. Cysteine 188 and cysteine 258 are oxidised to a cystine. A helical transmembrane segment spans residues 190–218; it reads LVTIAHNYFYVTNFFWMFGEGCYLHTAIV. Over 219–225 the chain is Cytoplasmic; that stretch reads LTYSTDK. A helical transmembrane segment spans residues 226 to 253; it reads LRKWMFICIGWCIPFPIIVAWAIGKLYY. Over 254–269 the chain is Extracellular; sequence DNEKCWFGKKAGVYTD. The helical transmembrane segment at 270–295 threads the bilayer; it reads FIYQGPVILVLLINFIFLFNIVRILM. The Cytoplasmic segment spans residues 296-306; the sequence is TKLRASTTSET. Residues 307 to 331 form a helical membrane-spanning segment; that stretch reads IQYRKAVKATLVLLPLLGITYMLFF. Topologically, residues 332 to 338 are extracellular; sequence VTPGEDE. Residues 339–368 form a helical membrane-spanning segment; that stretch reads ISRIVFIYFNSFLQSFQGFFVSVFYCFLNS. The Cytoplasmic portion of the chain corresponds to 369–415; the sequence is EVRSAVRKRWHRWQDKHSIRARVARAMSIPTSPTRISFHSIKQSSAI.

Belongs to the G-protein coupled receptor 2 family. In terms of assembly, interacts (via N-terminal extracellular domain) with CRF and UCN.

The protein resides in the cell membrane. Functionally, G-protein coupled receptor for CRH (corticotropin-releasing factor) and UCN (urocortin). Has high affinity for CRH and UCN. Ligand binding causes a conformation change that triggers signaling via guanine nucleotide-binding proteins (G proteins) and down-stream effectors, such as adenylate cyclase. Promotes the activation of adenylate cyclase, leading to increased intracellular cAMP levels. The protein is Corticotropin-releasing factor receptor 1 (crhr1) of Xenopus laevis (African clawed frog).